Consider the following 119-residue polypeptide: Gas vesicle protein O1 (119 aa).

The span at 1–12 (MADPANDRSERE) shows a compositional bias: basic and acidic residues. The disordered stretch occupies residues 1–48 (MADPANDRSEREEGGEDDETPPASDGNPSPSANSFTLSNAQTRAREAA). Residues 26–42 (GNPSPSANSFTLSNAQT) show a composition bias toward polar residues.

The protein belongs to the gas vesicle GvpO family. As to quaternary structure, forms homodimers, forms a GvpN1-GvpO1 heterodimer, interacts with GvpC1 (via the latter's C-terminus), GvpF1, GvpI1 and GvpL1, might interact with GvpA1.

The protein localises to the gas vesicle. The protein resides in the cytoplasm. Functionally, a minor component of the gas vesicle, also found in soluble extracts. May play a role in transcription and/or RNA stability and in GV assembly. Gas vesicles are hollow, gas filled proteinaceous nanostructures found in several microbial planktonic microorganisms. They allow positioning of halobacteria at the optimal depth for growth in the poorly aerated, shallow brine pools of their habitat. Its function is as follows. Expression of a 9.5 kb p-vac DNA fragment containing 2 divergently transcribed regions (gvpD-gvpE-gvpF-gvpG-gvpH-gvpI-gvpJ-gvpK-gvpL-gvpM and gvpA-gvpC-gvpN-gvpO) allows H.volcanii to produce gas vesicles. A minimal gas vesicle can be made in H.volcanii by gvpA1-gvpO1 gvpF1-gvpG1-gvpJ1-gvpK1-gvpL1-gvpM1; lack of enough GvpJ1 prevents formation. The same region restores gas vesicle production in H.halobium without the p-vac locus, but it still has the c-vac locus. This Halobacterium salinarum (strain ATCC 700922 / JCM 11081 / NRC-1) (Halobacterium halobium) protein is Gas vesicle protein O1.